Reading from the N-terminus, the 142-residue chain is Hemoglobin subunit alpha (142 aa).

Residues Val2–Arg142 form the Globin domain. The residue at position 4 (Ser4) is a Phosphoserine. Lys8 and Lys12 each carry N6-succinyllysine. N6-acetyllysine; alternate is present on Lys17. Lys17 carries the post-translational modification N6-succinyllysine; alternate. The residue at position 25 (Tyr25) is a Phosphotyrosine. Residue Lys41 is modified to N6-succinyllysine. His59 lines the O2 pocket. Residue His88 coordinates heme b. Position 103 is a phosphoserine (Ser103). At Thr109 the chain carries Phosphothreonine. 2 positions are modified to phosphoserine: Ser125 and Ser132. Residues Thr135 and Thr138 each carry the phosphothreonine modification. At Ser139 the chain carries Phosphoserine.

It belongs to the globin family. In terms of assembly, heterotetramer of two alpha chains and two beta chains. Red blood cells.

Its function is as follows. Involved in oxygen transport from the lung to the various peripheral tissues. Functionally, hemopressin acts as an antagonist peptide of the cannabinoid receptor CNR1. Hemopressin-binding efficiently blocks cannabinoid receptor CNR1 and subsequent signaling. The sequence is that of Hemoglobin subunit alpha (HBA) from Balaenoptera acutorostrata (Common minke whale).